Consider the following 447-residue polypeptide: Tektin-4 (447 aa).

2 coiled-coil regions span residues 322 to 348 (LRKT…DKEA) and 375 to 423 (FRLL…TNSL).

This sequence belongs to the tektin family. As to quaternary structure, microtubule inner protein component of sperm flagellar doublet microtubules. Post-translationally, ubiquitinated, leading to its degradation. Deubiquitinated by USP16, promoting its stability. In terms of tissue distribution, detected in testis, where it is weakly expressed in round spermatids, and strongly expressed in the flagellum of step 16 elongated spermatids (at protein level). Expressed in spermatozoa. In the sperm flagellum, localizes to the principal piece and midpiece (at protein level). Specifically expressed in testis; not detected in other tissues tested.

It localises to the cytoplasm. The protein localises to the cytoskeleton. It is found in the cilium axoneme. Its subcellular location is the flagellum axoneme. In terms of biological role, microtubule inner protein (MIP) part of the dynein-decorated doublet microtubules (DMTs) in cilia and flagellar axoneme. Forms filamentous polymers in the walls of ciliary and flagellar microtubules. Contributes to normal sperm motility. The chain is Tektin-4 (Tekt4) from Mus musculus (Mouse).